Reading from the N-terminus, the 181-residue chain is Trafficking protein particle complex subunit 3 homolog (181 aa).

A lipid anchor (S-palmitoyl cysteine) is attached at C70.

The protein belongs to the TRAPP small subunits family. BET3 subfamily. Homodimer. Part of the multisubunit TRAPP (transport protein particle) complex.

The protein resides in the golgi apparatus. Its subcellular location is the cis-Golgi network. It is found in the endoplasmic reticulum. May play a role in vesicular transport from endoplasmic reticulum to Golgi. Required for the systemic spread of the RNAi response. The sequence is that of Trafficking protein particle complex subunit 3 homolog (trpp-3) from Caenorhabditis elegans.